The primary structure comprises 320 residues: L-lactate dehydrogenase 1 (320 aa).

Residues Val-18, Asp-39, Arg-44, Tyr-69, and Gly-83 to Ala-84 contribute to the NAD(+) site. Gln-86 and Arg-92 together coordinate substrate. Residues Ser-105, Ala-122–Asn-124, and Ser-147 each bind NAD(+). Position 124-127 (Asn-124–Asp-127) interacts with substrate. Asp-152–Arg-155 serves as a coordination point for substrate. His-179 (proton acceptor) is an active-site residue. Tyr-223 is modified (phosphotyrosine). Thr-232 lines the substrate pocket.

This sequence belongs to the LDH/MDH superfamily. LDH family. As to quaternary structure, homotetramer.

It localises to the cytoplasm. The catalysed reaction is (S)-lactate + NAD(+) = pyruvate + NADH + H(+). It functions in the pathway fermentation; pyruvate fermentation to lactate; (S)-lactate from pyruvate: step 1/1. Functionally, catalyzes the conversion of lactate to pyruvate. The chain is L-lactate dehydrogenase 1 from Lactiplantibacillus plantarum (strain ATCC BAA-793 / NCIMB 8826 / WCFS1) (Lactobacillus plantarum).